The primary structure comprises 609 residues: Protein alan shepard (609 aa).

The segment covering 1–12 has biased composition (pro residues); that stretch reads MHPRYSPAPPPL. Residues 1 to 96 are disordered; sequence MHPRYSPAPP…ASVAAAPPTP (96 aa). Tyr5 carries the post-translational modification Phosphotyrosine. A compositionally biased stretch (low complexity) spans 13–35; it reads HQQQQQQPPQQQQQQMGGPHQQQ. A compositionally biased stretch (gly residues) spans 37–50; it reads GGVGPGTGHGGVGA. 2 stretches are compositionally biased toward low complexity: residues 51-68 and 83-92; these read AVGA…NSQQ and SSSAASVAAA. A phosphotyrosine mark is found at Tyr152 and Tyr168. The segment at 190–252 is disordered; it reads PATTTYGQRV…AQNQNQQGGE (63 aa). Over residues 204-252 the composition is skewed to low complexity; the sequence is SPSNTNSSSSSNTGSQSGTLSTSLSNTTNTNTTMGPNGTAQNQNQQGGE. RRM domains are found at residues 257-330 and 336-415; these read TNLY…MAKQ and TNLY…FADG. Residues 583–609 are disordered; the sequence is MTDSEQASTAASPDEAYTQYPHQAAPK.

Its function is as follows. Has a role in the perception of gravity. This chain is Protein alan shepard, found in Drosophila grimshawi (Hawaiian fruit fly).